The primary structure comprises 306 residues: Ribonuclease H2 subunit B (306 aa).

The interval 232–285 (LPDLSSPTPEPPVKKRRVSDAPVEADEDYTKYNSDNKSRKSNSKMTAAQKSLAK) is disordered. A compositionally biased stretch (basic and acidic residues) spans 259–269 (DYTKYNSDNKS).

It belongs to the RNase H2 subunit B family. The RNase H2 complex is a heterotrimer composed of the catalytic subunit RNASEH2A and the non-catalytic subunits RNASEH2B and RNASEH2C.

It localises to the nucleus. In terms of biological role, non catalytic subunit of RNase H2, an endonuclease that specifically degrades the RNA of RNA:DNA hybrids. Participates in DNA replication, possibly by mediating the removal of lagging-strand Okazaki fragment RNA primers during DNA replication. Mediates the excision of single ribonucleotides from DNA:RNA duplexes. This Xenopus laevis (African clawed frog) protein is Ribonuclease H2 subunit B (rnaseh2b).